We begin with the raw amino-acid sequence, 312 residues long: Ribosomal RNA small subunit methyltransferase H (312 aa).

Residues 34-36, Asp-54, Phe-81, Asp-102, and Gln-109 contribute to the S-adenosyl-L-methionine site; that span reads AGH.

Belongs to the methyltransferase superfamily. RsmH family.

The protein localises to the cytoplasm. The catalysed reaction is cytidine(1402) in 16S rRNA + S-adenosyl-L-methionine = N(4)-methylcytidine(1402) in 16S rRNA + S-adenosyl-L-homocysteine + H(+). Specifically methylates the N4 position of cytidine in position 1402 (C1402) of 16S rRNA. The polypeptide is Ribosomal RNA small subunit methyltransferase H (Geobacter sp. (strain M21)).